Reading from the N-terminus, the 282-residue chain is Release factor glutamine methyltransferase (282 aa).

3 residues coordinate S-adenosyl-L-methionine: Asp-141, Phe-169, and Asn-186. Substrate is bound at residue 186-189 (NPPY).

Belongs to the protein N5-glutamine methyltransferase family. PrmC subfamily.

It catalyses the reaction L-glutaminyl-[peptide chain release factor] + S-adenosyl-L-methionine = N(5)-methyl-L-glutaminyl-[peptide chain release factor] + S-adenosyl-L-homocysteine + H(+). Its function is as follows. Methylates the class 1 translation termination release factors RF1/PrfA and RF2/PrfB on the glutamine residue of the universally conserved GGQ motif. The protein is Release factor glutamine methyltransferase of Mycoplasma mycoides subsp. mycoides SC (strain CCUG 32753 / NCTC 10114 / PG1).